The sequence spans 561 residues: Inositol phosphate phosphatase SopB (561 aa).

Residue C460 is part of the active site. The short motif at 460–466 (CKSGKDR) is the CX5R motif element.

It belongs to the phosphatase IpgD/SopB family.

The protein localises to the secreted. In terms of biological role, converts phosphatidylinositol 3,4,5-trisphosphate (PtdIns 3,4,5-P3) to PtdIns 3-P and prevents the transition of PtdIns 3-P to PtdIns 3,5-P2. It is one of the known effectors injected by Salmonella into the host cell and is required for invasion and for an efficient generation and maintenance of Salmonella-containing vacuole (SVC). Alteration of the phosphoinositide composition of the plasma membrane causes membrane ruffling and actin cytoskeleton rearrangements. The persistence of PtdIns 3-P diverts the SCV from the endocytic pathway resulting in enlarged vesicles, which are essential to create a favorable environment where Salmonella can replicate and avoid immune defenses of the host cell. In Salmonella typhimurium (strain LT2 / SGSC1412 / ATCC 700720), this protein is Inositol phosphate phosphatase SopB (sopB).